We begin with the raw amino-acid sequence, 492 residues long: MDPSKYRPSSAYDTPFLTTNAGGPVYNNVSSLTVGPRGPVLLEDYYLIEKLATFDREKIPERVVHARGASAKGFFEVTHDISHLTCADFLRAPGAQTPVICRFSTVVHERGSPESIRDIRGFAVKFYTREGNFDLVGNNVPVFFNRDAKSFPDTIRALKPNPKSHIQENWRILDFFSFLPESLHTFAFFYDDVCLPTDYRHMEGFGVHAYQLINKEGKAHYVKFHWKPTCGVKCMSEEEAIRVGGTNHSHATKDLYDSIAAGNYPEWKLFIQTMDPEDVDKFDFDPLDVTKTWPEDLLPLIPVGRLVLNRNIDNFFAENEQLAFNPGHIVPGIYYSEDKLLQTRIFAYADTQRHRIGPNYMQLPVNAPKCGHHNNHRDGAMNMTHRDEEVDYLPSRFDPCRPAEQYPIPSCVLNGRRTNCVIPKENNFKQAGERYRSWEPDRQDRYINKWVESLSDPRVTHEIRSIWISYLSQADKSCGQKVASRLTVKPTM.

Residues His-65 and Asn-138 contribute to the active site. Heme is bound at residue Tyr-348.

It belongs to the catalase family. In terms of assembly, homotetramer. Heme serves as cofactor.

It localises to the peroxisome. The catalysed reaction is 2 H2O2 = O2 + 2 H2O. Functionally, occurs in almost all aerobically respiring organisms and serves to protect cells from the toxic effects of hydrogen peroxide. This Solanum lycopersicum (Tomato) protein is Catalase isozyme 1 (CAT1).